Consider the following 173-residue polypeptide: Photosystem I assembly protein Ycf3 (173 aa).

TPR repeat units lie at residues 35-68 (AYVY…EENP), 72-105 (GETL…NPKQ), and 120-153 (GRTA…NPGG).

The protein belongs to the Ycf3 family.

The protein resides in the cellular thylakoid membrane. Essential for the assembly of the photosystem I (PSI) complex. May act as a chaperone-like factor to guide the assembly of the PSI subunits. The protein is Photosystem I assembly protein Ycf3 of Synechococcus sp. (strain WH7803).